The sequence spans 179 residues: Large ribosomal subunit protein uL6 (179 aa).

This sequence belongs to the universal ribosomal protein uL6 family. As to quaternary structure, part of the 50S ribosomal subunit.

In terms of biological role, this protein binds to the 23S rRNA, and is important in its secondary structure. It is located near the subunit interface in the base of the L7/L12 stalk, and near the tRNA binding site of the peptidyltransferase center. This is Large ribosomal subunit protein uL6 from Trichlorobacter lovleyi (strain ATCC BAA-1151 / DSM 17278 / SZ) (Geobacter lovleyi).